Reading from the N-terminus, the 450-residue chain is Phosphoglucosamine mutase (450 aa).

The Phosphoserine intermediate role is filled by serine 104. Mg(2+) is bound by residues serine 104, aspartate 243, aspartate 245, and aspartate 247. Serine 104 carries the phosphoserine modification.

It belongs to the phosphohexose mutase family. The cofactor is Mg(2+). In terms of processing, activated by phosphorylation.

It carries out the reaction alpha-D-glucosamine 1-phosphate = D-glucosamine 6-phosphate. Catalyzes the conversion of glucosamine-6-phosphate to glucosamine-1-phosphate. This Cutibacterium acnes (strain DSM 16379 / KPA171202) (Propionibacterium acnes) protein is Phosphoglucosamine mutase.